The chain runs to 278 residues: uncharacterized protein (278 aa).

The N-terminal stretch at 1–20 (MSPLIVGTLIIILLSGLATA) is a signal peptide. Glycine 96 carries GPI-anchor amidated glycine lipidation. Positions 97–278 (TFLTSPTAKR…QLIMQTFNGS (182 aa)) are cleaved as a propeptide — removed in mature form.

The protein resides in the cell membrane. This is an uncharacterized protein from Schizosaccharomyces pombe (strain 972 / ATCC 24843) (Fission yeast).